The primary structure comprises 466 residues: Adenosylhomocysteinase (466 aa).

Substrate contacts are provided by Thr57, Asp132, and Glu192. 193 to 195 (TTT) serves as a coordination point for NAD(+). Residues Lys222 and Asp226 each contribute to the substrate site. Residues Asn227, 256–261 (GYGDVG), Glu279, Asn314, 335–337 (IGH), and Asn380 each bind NAD(+).

It belongs to the adenosylhomocysteinase family. It depends on NAD(+) as a cofactor.

It localises to the cytoplasm. It carries out the reaction S-adenosyl-L-homocysteine + H2O = L-homocysteine + adenosine. It functions in the pathway amino-acid biosynthesis; L-homocysteine biosynthesis; L-homocysteine from S-adenosyl-L-homocysteine: step 1/1. Functionally, may play a key role in the regulation of the intracellular concentration of adenosylhomocysteine. The chain is Adenosylhomocysteinase from Rhizobium leguminosarum bv. trifolii (strain WSM2304).